We begin with the raw amino-acid sequence, 337 residues long: DNA-directed RNA polymerase subunit alpha (337 aa).

The tract at residues 1–233 is alpha N-terminal domain (alpha-NTD); sequence MIQKNWQELI…DQLALFINFK (233 aa). Residues 249–337 are alpha C-terminal domain (alpha-CTD); that stretch reads FNPALLKKVD…DLAKRYEDQY (89 aa).

The protein belongs to the RNA polymerase alpha chain family. As to quaternary structure, homodimer. The RNAP catalytic core consists of 2 alpha, 1 beta, 1 beta' and 1 omega subunit. When a sigma factor is associated with the core the holoenzyme is formed, which can initiate transcription.

It catalyses the reaction RNA(n) + a ribonucleoside 5'-triphosphate = RNA(n+1) + diphosphate. DNA-dependent RNA polymerase catalyzes the transcription of DNA into RNA using the four ribonucleoside triphosphates as substrates. The protein is DNA-directed RNA polymerase subunit alpha of Bartonella henselae (strain ATCC 49882 / DSM 28221 / CCUG 30454 / Houston 1) (Rochalimaea henselae).